A 148-amino-acid chain; its full sequence is Urease accessory protein UreE (148 aa).

This sequence belongs to the UreE family.

The protein localises to the cytoplasm. Functionally, involved in urease metallocenter assembly. Binds nickel. Probably functions as a nickel donor during metallocenter assembly. This Aliarcobacter butzleri (strain RM4018) (Arcobacter butzleri) protein is Urease accessory protein UreE.